A 101-amino-acid chain; its full sequence is Large ribosomal subunit protein uL24 (101 aa).

It belongs to the universal ribosomal protein uL24 family. As to quaternary structure, part of the 50S ribosomal subunit.

Its function is as follows. One of two assembly initiator proteins, it binds directly to the 5'-end of the 23S rRNA, where it nucleates assembly of the 50S subunit. In terms of biological role, one of the proteins that surrounds the polypeptide exit tunnel on the outside of the subunit. In Clostridioides difficile (strain 630) (Peptoclostridium difficile), this protein is Large ribosomal subunit protein uL24.